A 106-amino-acid polypeptide reads, in one-letter code: MPRQSPPNLAKLIALDLLTVGRVPLLLLVLIFSCAMGVVFMTHHTRQAISAKDQAFMERERLDNEWRNLILEETALAEHSRVQQLARKDLEMKRPDSDKEVVINLK.

Residues 1-22 lie on the Cytoplasmic side of the membrane; sequence MPRQSPPNLAKLIALDLLTVGR. Residues 23–43 form a helical membrane-spanning segment; that stretch reads VPLLLLVLIFSCAMGVVFMTH. Over 44–106 the chain is Periplasmic; that stretch reads HTRQAISAKD…SDKEVVINLK (63 aa).

It belongs to the FtsL family. In terms of assembly, part of a complex composed of FtsB, FtsL and FtsQ.

It localises to the cell inner membrane. Essential cell division protein. May link together the upstream cell division proteins, which are predominantly cytoplasmic, with the downstream cell division proteins, which are predominantly periplasmic. In Vibrio cholerae serotype O1 (strain ATCC 39315 / El Tor Inaba N16961), this protein is Cell division protein FtsL.